We begin with the raw amino-acid sequence, 583 residues long: Malonate--CoA ligase ACSF3, mitochondrial (583 aa).

The N-terminal 27 residues, 1–27 (MPPHLALPFRRLFWSLASSQLIPRRHR), are a transit peptide targeting the mitochondrion. Residues 202 to 210 (TSGTTGRPK), aspartate 455, arginine 469, and lysine 561 each bind ATP.

It belongs to the ATP-dependent AMP-binding enzyme family.

It is found in the mitochondrion. It catalyses the reaction tetracosanoate + ATP + CoA = tetracosanoyl-CoA + AMP + diphosphate. The enzyme catalyses malonate + ATP + CoA = malonyl-CoA + AMP + diphosphate. Functionally, catalyzes the initial reaction in intramitochondrial fatty acid synthesis, by activating malonate and methylmalonate, but not acetate, into their respective CoA thioester. May have some preference toward very-long-chain substrates. This Mus musculus (Mouse) protein is Malonate--CoA ligase ACSF3, mitochondrial.